Here is a 163-residue protein sequence, read N- to C-terminus: Beta-lactoglobulin-2 (163 aa).

2 disulfides stabilise this stretch: Cys-66–Cys-161 and Cys-106–Cys-120.

This sequence belongs to the calycin superfamily. Lipocalin family. As to quaternary structure, monomer.

The protein localises to the secreted. Lactoglobulin is the primary component of whey, it binds retinol and is probably involved in the transport of that molecule. The protein is Beta-lactoglobulin-2 (LGB2) of Equus asinus (Donkey).